A 273-amino-acid polypeptide reads, in one-letter code: Type II pantothenate kinase (273 aa).

Position 8–15 (8–15 (DAGGTLTK)) interacts with ATP. The active-site Proton acceptor is E76. Residues T105, 127-131 (GGTIM), F143, and S230 contribute to the ATP site.

It belongs to the type II pantothenate kinase family. In terms of assembly, homodimer.

It is found in the cytoplasm. It carries out the reaction (R)-pantothenate + ATP = (R)-4'-phosphopantothenate + ADP + H(+). The protein operates within cofactor biosynthesis; coenzyme A biosynthesis; CoA from (R)-pantothenate: step 1/5. In terms of biological role, catalyzes the phosphorylation of pantothenate (Pan), the first step in CoA biosynthesis. The polypeptide is Type II pantothenate kinase (Bacillus cereus (strain ATCC 14579 / DSM 31 / CCUG 7414 / JCM 2152 / NBRC 15305 / NCIMB 9373 / NCTC 2599 / NRRL B-3711)).